We begin with the raw amino-acid sequence, 611 residues long: Probable methyltransferase PMT1 (611 aa).

At 1–11 the chain is on the cytoplasmic side; the sequence is MRGRSEGGKKK. The helical; Signal-anchor for type II membrane protein transmembrane segment at 12 to 32 threads the bilayer; the sequence is PVIVLLCVASVVLVFVYLFFG. Residues 33–611 lie on the Lumenal side of the membrane; it reads SSNHKAIEYG…LTSESLRDLE (579 aa). An N-linked (GlcNAc...) asparagine glycan is attached at Asn-345.

Belongs to the methyltransferase superfamily.

The protein resides in the golgi apparatus membrane. The polypeptide is Probable methyltransferase PMT1 (Arabidopsis thaliana (Mouse-ear cress)).